A 355-amino-acid polypeptide reads, in one-letter code: Cyclin-D1-binding protein 1 (355 aa).

The residue at position 2 (Ala-2) is an N-acetylalanine. Interaction with TCF3 stretches follow at residues 2–181 (ASST…VDLV) and 147–355 (ISCN…AVEL). The interaction with RPLP0 stretch occupies residues 2–187 (ASSTTPVSFL…VDLVKDAHEE (186 aa)). The interval 2-205 (ASSTTPVSFL…DPYCGLLDDS (204 aa)) is required for interaction with CCND1. The interval 203 to 224 (DDSEDNSDSHHNEDGVGLPSNR) is disordered. The tract at residues 235–355 (LITPCLALVR…KELTQRAVEL (121 aa)) is interaction with RPLP0.

It belongs to the CCNDBP1 family. Interacts with CCND1 and GRAP2. May also interact with COPS5, RPLP0, SIRT6, SYF2 and TCF3. Phosphorylated.

It is found in the cytoplasm. Its subcellular location is the nucleus. In terms of biological role, may negatively regulate cell cycle progression. May act at least in part via inhibition of the cyclin-D1/CDK4 complex, thereby preventing phosphorylation of RB1 and blocking E2F-dependent transcription. In Rattus norvegicus (Rat), this protein is Cyclin-D1-binding protein 1 (Ccndbp1).